The chain runs to 221 residues: Endo-1,4-beta-xylanase 11A (221 aa).

Residues 1 to 18 (MKFATVLAFATAAGAAFA) form the signal peptide. The GH11 domain maps to 23–220 (SSETTEAGQL…GTGSASMSVS (198 aa)). The active-site Nucleophile is E111. Residue N117 is glycosylated (N-linked (GlcNAc...) asparagine). E207 (proton donor) is an active-site residue.

The protein belongs to the glycosyl hydrolase 11 (cellulase G) family.

It is found in the secreted. It carries out the reaction Endohydrolysis of (1-&gt;4)-beta-D-xylosidic linkages in xylans.. Its pathway is glycan degradation; xylan degradation. Functionally, endo-1,4-beta-xylanase involved in the hydrolysis of xylan, a major structural heterogeneous polysaccharide found in plant biomass representing the second most abundant polysaccharide in the biosphere, after cellulose. In Mycosarcoma maydis (Corn smut fungus), this protein is Endo-1,4-beta-xylanase 11A (XYN11A).